A 952-amino-acid polypeptide reads, in one-letter code: Protein translocase subunit SecA (952 aa).

ATP contacts are provided by residues Gln104, 122-126 (GEGKT), and Asp512.

This sequence belongs to the SecA family. As to quaternary structure, monomer and homodimer. Part of the essential Sec protein translocation apparatus which comprises SecA, SecYEG and auxiliary proteins SecDF. Other proteins may also be involved.

It localises to the cell inner membrane. Its subcellular location is the cytoplasm. The enzyme catalyses ATP + H2O + cellular proteinSide 1 = ADP + phosphate + cellular proteinSide 2.. In terms of biological role, part of the Sec protein translocase complex. Interacts with the SecYEG preprotein conducting channel. Has a central role in coupling the hydrolysis of ATP to the transfer of proteins into and across the cell membrane, serving as an ATP-driven molecular motor driving the stepwise translocation of polypeptide chains across the membrane. This is Protein translocase subunit SecA from Gloeobacter violaceus (strain ATCC 29082 / PCC 7421).